Here is a 210-residue protein sequence, read N- to C-terminus: Pyridoxine/pyridoxamine 5'-phosphate oxidase (210 aa).

Substrate contacts are provided by residues 7 to 10 and Lys65; that span reads RQSY. FMN is bound by residues 60–65, 75–76, Arg81, Lys82, and Gln104; these read RIVLIK and YT. Substrate is bound by residues Tyr122, Arg126, and Ser130. FMN is bound by residues 139-140 and Trp182; that span reads QS. Residue 188–190 participates in substrate binding; the sequence is RLH. Arg192 contributes to the FMN binding site.

This sequence belongs to the pyridoxamine 5'-phosphate oxidase family. In terms of assembly, homodimer. FMN serves as cofactor.

It catalyses the reaction pyridoxamine 5'-phosphate + O2 + H2O = pyridoxal 5'-phosphate + H2O2 + NH4(+). It carries out the reaction pyridoxine 5'-phosphate + O2 = pyridoxal 5'-phosphate + H2O2. It functions in the pathway cofactor metabolism; pyridoxal 5'-phosphate salvage; pyridoxal 5'-phosphate from pyridoxamine 5'-phosphate: step 1/1. The protein operates within cofactor metabolism; pyridoxal 5'-phosphate salvage; pyridoxal 5'-phosphate from pyridoxine 5'-phosphate: step 1/1. Catalyzes the oxidation of either pyridoxine 5'-phosphate (PNP) or pyridoxamine 5'-phosphate (PMP) into pyridoxal 5'-phosphate (PLP). The chain is Pyridoxine/pyridoxamine 5'-phosphate oxidase from Bordetella petrii (strain ATCC BAA-461 / DSM 12804 / CCUG 43448).